An 892-amino-acid chain; its full sequence is Iodate reductase subunit IdrA (892 aa).

Cysteine 27, cysteine 30, and cysteine 34 together coordinate [3Fe-4S] cluster. Gly residues predominate over residues 431–442; that stretch reads RGGGHQRGGLSA. The tract at residues 431–452 is disordered; sequence RGGGHQRGGLSAGGNSEWLSPE.

Belongs to the prokaryotic molybdopterin-containing oxidoreductase family. In terms of assembly, the iodate reductase (Idr) complex is composed of a molybdopterin-dependent iodate reductase (IdrA and IdrB subunits) and two associated peroxidases (IdrP1 and IdrP2). The cofactor is [3Fe-4S] cluster. Requires Mo-bis(molybdopterin guanine dinucleotide) as cofactor.

It localises to the periplasm. In terms of biological role, involved in iodate respiration. Probably catalyzes the reduction of iodate (IO(3)(-)) to hypoiodous acid (HIO) and H(2)O(2), using a reduced cytochrome c as the electron donor. The chain is Iodate reductase subunit IdrA from Pseudomonas sp. (strain SCT).